The sequence spans 336 residues: Alcohol dehydrogenase (336 aa).

Zn(2+)-binding residues include cysteine 37, histidine 58, cysteine 89, cysteine 92, cysteine 95, cysteine 103, and cysteine 145.

It belongs to the zinc-containing alcohol dehydrogenase family. The cofactor is Zn(2+).

The catalysed reaction is a primary alcohol + NAD(+) = an aldehyde + NADH + H(+). It carries out the reaction a secondary alcohol + NAD(+) = a ketone + NADH + H(+). The protein is Alcohol dehydrogenase (adh) of Staphylococcus aureus (strain USA300).